The following is a 571-amino-acid chain: Protein PNS1 (571 aa).

Residues Met1–Lys96 form a disordered region. Topologically, residues Met1 to Lys118 are cytoplasmic. Polar residues predominate over residues Tyr15–Tyr31. 2 stretches are compositionally biased toward low complexity: residues Gln39–Asn52 and Gly71–Gln80. A compositionally biased stretch (pro residues) spans Gln81–Pro90. A helical membrane pass occupies residues Ile119–Ile139. Topologically, residues Arg140 to Thr166 are extracellular. Residues Leu167–Ala187 form a helical membrane-spanning segment. The Cytoplasmic portion of the chain corresponds to Ala188 to Arg189. Residues Val190–Thr210 traverse the membrane as a helical segment. Residue Ala211 is a topological domain, extracellular. A helical membrane pass occupies residues Ile212–Leu232. Residues Thr233–Ser263 are Cytoplasmic-facing. The helical transmembrane segment at Val264–Phe284 threads the bilayer. Residues Thr285–Asn311 are Extracellular-facing. A helical transmembrane segment spans residues Gly312–Ile332. Residues Lys333 to Ala369 are Cytoplasmic-facing. A helical membrane pass occupies residues Val370 to Ile390. At Arg391–Asp406 the chain is on the extracellular side. A helical membrane pass occupies residues Thr407–Val427. Residues Thr428–Ser472 lie on the Cytoplasmic side of the membrane. Residues Val473–Leu493 form a helical membrane-spanning segment. At Lys494–Gly503 the chain is on the extracellular side. Residues Gly504–Ile524 traverse the membrane as a helical segment. Residues Thr525–Ile571 lie on the Cytoplasmic side of the membrane.

It belongs to the CTL (choline transporter-like) family.

The protein resides in the cell membrane. Its function is as follows. Probably involved in transport through the plasma membrane. The sequence is that of Protein PNS1 (PNS1) from Yarrowia lipolytica (strain CLIB 122 / E 150) (Yeast).